Here is a 364-residue protein sequence, read N- to C-terminus: MNVFKVFCLMVLLGWQLPAMAERIKDVSMVEGVRSNQLVGYGLVVGLPGTGEQSRFTEQSFKGMLNSFGITLPASLKPKIKNVAAVAVHAELPPFRKPGQTIDITVSSIGSAGSLRGGTLLQTFLKGVDGNVYAIGQGSLIVGGLGAEGLDGSKVVINTPTVGRIPNGATVERAVKSPFMQNDYITFNLNRPDFTTAKRLEKTINDLVGPNSAQALDAASIRVIAPRDASQRVSYLSTLENLEFTPADTAAKIIVNSRTGTIVIGKNVKLQPAAITHGGLTVTIAEQLNVSQPNAFSDGDTVVTQQSIIDIKQDDSRAFVFNPGVSLDDLVRAINEVGAAPGDLMAILEALKEAGAINGQLVVI.

The first 21 residues, 1 to 21 (MNVFKVFCLMVLLGWQLPAMA), serve as a signal peptide directing secretion.

This sequence belongs to the FlgI family. In terms of assembly, the basal body constitutes a major portion of the flagellar organelle and consists of four rings (L,P,S, and M) mounted on a central rod.

It is found in the periplasm. Its subcellular location is the bacterial flagellum basal body. Assembles around the rod to form the L-ring and probably protects the motor/basal body from shearing forces during rotation. This is Flagellar P-ring protein from Pseudoalteromonas translucida (strain TAC 125).